The sequence spans 1249 residues: DNA-directed RNA polymerase subunit beta (1249 aa).

The protein belongs to the RNA polymerase beta chain family. In terms of assembly, the RNAP catalytic core consists of 2 alpha, 1 beta, 1 beta' and 1 omega subunit. When a sigma factor is associated with the core the holoenzyme is formed, which can initiate transcription.

It carries out the reaction RNA(n) + a ribonucleoside 5'-triphosphate = RNA(n+1) + diphosphate. In terms of biological role, DNA-dependent RNA polymerase catalyzes the transcription of DNA into RNA using the four ribonucleoside triphosphates as substrates. The polypeptide is DNA-directed RNA polymerase subunit beta (Clostridium botulinum (strain Eklund 17B / Type B)).